We begin with the raw amino-acid sequence, 218 residues long: uncharacterized protein (218 aa).

An ABC transporter domain is found at 2–216 (IEVLNLTKKI…ETSEKVIYKK (215 aa)). 34–41 (GSNGSGKT) lines the ATP pocket.

Belongs to the ABC transporter superfamily.

This is an uncharacterized protein from Bacillus subtilis (strain 168).